The following is a 417-amino-acid chain: UDP-N-acetylglucosamine 1-carboxyvinyltransferase (417 aa).

Residue 22–23 participates in phosphoenolpyruvate binding; that stretch reads KN. R91 is a UDP-N-acetyl-alpha-D-glucosamine binding site. The active-site Proton donor is C115. A 2-(S-cysteinyl)pyruvic acid O-phosphothioketal modification is found at C115. UDP-N-acetyl-alpha-D-glucosamine-binding positions include 120-124, D304, and I326; that span reads RPVDL.

The protein belongs to the EPSP synthase family. MurA subfamily.

The protein resides in the cytoplasm. The catalysed reaction is phosphoenolpyruvate + UDP-N-acetyl-alpha-D-glucosamine = UDP-N-acetyl-3-O-(1-carboxyvinyl)-alpha-D-glucosamine + phosphate. It participates in cell wall biogenesis; peptidoglycan biosynthesis. In terms of biological role, cell wall formation. Adds enolpyruvyl to UDP-N-acetylglucosamine. This chain is UDP-N-acetylglucosamine 1-carboxyvinyltransferase, found in Nitratidesulfovibrio vulgaris (strain DSM 19637 / Miyazaki F) (Desulfovibrio vulgaris).